A 213-amino-acid chain; its full sequence is MQLPDPRMIQLVMSLRGGGVTDAKVMGALERTPRHLFVPQRFGDQAYDDRALPIDCGQTISQPLIVALMTQALKLDDRCKVLEIGTGSGYQAAVLARLARRVYSVERYRTLSREAEARFEAMRLTNIVTRIGDGTQGWPEQAPFDRIILTASAPTRPDVILEQLKDGGIAVAPVDRENRQVLVRYARHGDDITETDLMDVRFVPLVKGEARAL.

Serine 61 is an active-site residue.

It belongs to the methyltransferase superfamily. L-isoaspartyl/D-aspartyl protein methyltransferase family.

The protein resides in the cytoplasm. The catalysed reaction is [protein]-L-isoaspartate + S-adenosyl-L-methionine = [protein]-L-isoaspartate alpha-methyl ester + S-adenosyl-L-homocysteine. Catalyzes the methyl esterification of L-isoaspartyl residues in peptides and proteins that result from spontaneous decomposition of normal L-aspartyl and L-asparaginyl residues. It plays a role in the repair and/or degradation of damaged proteins. This chain is Protein-L-isoaspartate O-methyltransferase, found in Maricaulis maris (strain MCS10) (Caulobacter maris).